A 503-amino-acid polypeptide reads, in one-letter code: Glycerol kinase (503 aa).

T14 contacts ADP. Residues T14, T15, and S16 each coordinate ATP. T14 lines the sn-glycerol 3-phosphate pocket. R18 contributes to the ADP binding site. The sn-glycerol 3-phosphate site is built by R84, E85, Y136, and D246. Positions 84, 85, 136, 246, and 247 each coordinate glycerol. The ADP site is built by T268 and G311. ATP is bound by residues T268, G311, Q315, and G412. Residues G412 and N416 each contribute to the ADP site.

It belongs to the FGGY kinase family. Homotetramer and homodimer (in equilibrium). Heterodimer with EIIA-Glc. Binds 1 zinc ion per glycerol kinase EIIA-Glc dimer. The zinc ion is important for dimerization.

It catalyses the reaction glycerol + ATP = sn-glycerol 3-phosphate + ADP + H(+). The protein operates within polyol metabolism; glycerol degradation via glycerol kinase pathway; sn-glycerol 3-phosphate from glycerol: step 1/1. Its activity is regulated as follows. Activity of this regulatory enzyme is affected by several metabolites. Allosterically and non-competitively inhibited by fructose 1,6-bisphosphate (FBP) and unphosphorylated phosphocarrier protein EIIA-Glc (III-Glc), an integral component of the bacterial phosphotransferase (PTS) system. In terms of biological role, key enzyme in the regulation of glycerol uptake and metabolism. Catalyzes the phosphorylation of glycerol to yield sn-glycerol 3-phosphate. The polypeptide is Glycerol kinase (Klebsiella pneumoniae subsp. pneumoniae (strain ATCC 700721 / MGH 78578)).